The sequence spans 323 residues: Acetyl-coenzyme A carboxylase carboxyl transferase subunit alpha 1 (323 aa).

Residues Arg39 to Gln293 form the CoA carboxyltransferase C-terminal domain.

Belongs to the AccA family. As to quaternary structure, acetyl-CoA carboxylase is a heterohexamer composed of biotin carboxyl carrier protein (AccB), biotin carboxylase (AccC) and two subunits each of ACCase subunit alpha (AccA) and ACCase subunit beta (AccD).

It is found in the cytoplasm. It catalyses the reaction N(6)-carboxybiotinyl-L-lysyl-[protein] + acetyl-CoA = N(6)-biotinyl-L-lysyl-[protein] + malonyl-CoA. The protein operates within lipid metabolism; malonyl-CoA biosynthesis; malonyl-CoA from acetyl-CoA: step 1/1. In terms of biological role, component of the acetyl coenzyme A carboxylase (ACC) complex. First, biotin carboxylase catalyzes the carboxylation of biotin on its carrier protein (BCCP) and then the CO(2) group is transferred by the carboxyltransferase to acetyl-CoA to form malonyl-CoA. Its function is as follows. Does not confer resistance to the endogenous polyketide antibiotic thailandamide, does not confer resistance to thailandamide when expressed in S.typhimurium. This is Acetyl-coenzyme A carboxylase carboxyl transferase subunit alpha 1 from Burkholderia thailandensis (strain ATCC 700388 / DSM 13276 / CCUG 48851 / CIP 106301 / E264).